The sequence spans 154 residues: UPF0225 protein YPTB2098 (154 aa).

The protein belongs to the UPF0225 family.

This Yersinia pseudotuberculosis serotype I (strain IP32953) protein is UPF0225 protein YPTB2098.